A 380-amino-acid polypeptide reads, in one-letter code: Bifunctional enzyme IspD/IspF (380 aa).

The interval 1–224 (MTIPATYAAI…ERILGDAMDI (224 aa)) is 2-C-methyl-D-erythritol 4-phosphate cytidylyltransferase. The 2-C-methyl-D-erythritol 2,4-cyclodiphosphate synthase stretch occupies residues 225–380 (RLGNGFDVHA…SIATATLVKG (156 aa)). The a divalent metal cation site is built by D231 and H233. 4-CDP-2-C-methyl-D-erythritol 2-phosphate contacts are provided by residues 231-233 (DVH) and 257-258 (HS). H265 contributes to the a divalent metal cation binding site. Residues 279 to 281 (DIG), 355 to 358 (TTSE), F362, and R365 contribute to the 4-CDP-2-C-methyl-D-erythritol 2-phosphate site.

This sequence in the N-terminal section; belongs to the IspD/TarI cytidylyltransferase family. IspD subfamily. It in the C-terminal section; belongs to the IspF family. A divalent metal cation is required as a cofactor.

The enzyme catalyses 2-C-methyl-D-erythritol 4-phosphate + CTP + H(+) = 4-CDP-2-C-methyl-D-erythritol + diphosphate. The catalysed reaction is 4-CDP-2-C-methyl-D-erythritol 2-phosphate = 2-C-methyl-D-erythritol 2,4-cyclic diphosphate + CMP. The protein operates within isoprenoid biosynthesis; isopentenyl diphosphate biosynthesis via DXP pathway; isopentenyl diphosphate from 1-deoxy-D-xylulose 5-phosphate: step 2/6. It functions in the pathway isoprenoid biosynthesis; isopentenyl diphosphate biosynthesis via DXP pathway; isopentenyl diphosphate from 1-deoxy-D-xylulose 5-phosphate: step 4/6. Bifunctional enzyme that catalyzes the formation of 4-diphosphocytidyl-2-C-methyl-D-erythritol from CTP and 2-C-methyl-D-erythritol 4-phosphate (MEP) (IspD), and catalyzes the conversion of 4-diphosphocytidyl-2-C-methyl-D-erythritol 2-phosphate (CDP-ME2P) to 2-C-methyl-D-erythritol 2,4-cyclodiphosphate (ME-CPP) with a corresponding release of cytidine 5-monophosphate (CMP) (IspF). This Paracoccus denitrificans (strain Pd 1222) protein is Bifunctional enzyme IspD/IspF.